The following is a 405-amino-acid chain: Phosphopentomutase (405 aa).

6 residues coordinate Mn(2+): Asp-10, Asp-303, His-308, Asp-344, His-345, and His-356.

Belongs to the phosphopentomutase family. The cofactor is Mn(2+).

Its subcellular location is the cytoplasm. The catalysed reaction is 2-deoxy-alpha-D-ribose 1-phosphate = 2-deoxy-D-ribose 5-phosphate. The enzyme catalyses alpha-D-ribose 1-phosphate = D-ribose 5-phosphate. Its pathway is carbohydrate degradation; 2-deoxy-D-ribose 1-phosphate degradation; D-glyceraldehyde 3-phosphate and acetaldehyde from 2-deoxy-alpha-D-ribose 1-phosphate: step 1/2. Its function is as follows. Isomerase that catalyzes the conversion of deoxy-ribose 1-phosphate (dRib-1-P) and ribose 1-phosphate (Rib-1-P) to deoxy-ribose 5-phosphate (dRib-5-P) and ribose 5-phosphate (Rib-5-P), respectively. This chain is Phosphopentomutase, found in Shewanella pealeana (strain ATCC 700345 / ANG-SQ1).